An 81-amino-acid chain; its full sequence is Cytochrome b559 subunit alpha (81 aa).

The helical transmembrane segment at 21-35 threads the bilayer; it reads VIHSVTIPSLFVGGW. Residue histidine 23 coordinates heme.

The protein belongs to the PsbE/PsbF family. As to quaternary structure, heterodimer of an alpha subunit and a beta subunit. PSII is composed of 1 copy each of membrane proteins PsbA, PsbB, PsbC, PsbD, PsbE, PsbF, PsbH, PsbI, PsbJ, PsbK, PsbL, PsbM, PsbT, PsbY, PsbZ, Psb30/Ycf12, at least 3 peripheral proteins of the oxygen-evolving complex and a large number of cofactors. It forms dimeric complexes. Requires heme b as cofactor.

It is found in the plastid. The protein localises to the chloroplast thylakoid membrane. In terms of biological role, this b-type cytochrome is tightly associated with the reaction center of photosystem II (PSII). PSII is a light-driven water:plastoquinone oxidoreductase that uses light energy to abstract electrons from H(2)O, generating O(2) and a proton gradient subsequently used for ATP formation. It consists of a core antenna complex that captures photons, and an electron transfer chain that converts photonic excitation into a charge separation. The protein is Cytochrome b559 subunit alpha of Euglena gracilis.